The chain runs to 108 residues: Nucleoid-associated protein HCH_02614 (108 aa).

This sequence belongs to the YbaB/EbfC family. In terms of assembly, homodimer.

It is found in the cytoplasm. The protein localises to the nucleoid. Functionally, binds to DNA and alters its conformation. May be involved in regulation of gene expression, nucleoid organization and DNA protection. The sequence is that of Nucleoid-associated protein HCH_02614 from Hahella chejuensis (strain KCTC 2396).